A 244-amino-acid polypeptide reads, in one-letter code: Mediator of RNA polymerase II transcription subunit 19 (244 aa).

2 disordered regions span residues 1-67 (MENF…PFYL) and 171-244 (PKKK…SSLR). The segment covering 26–38 (GKPPPPPPPPPGG) has biased composition (pro residues). A compositionally biased stretch (low complexity) spans 44–55 (PPSTATSAPAGA). Positions 171-182 (PKKKNKHKHKQS) are enriched in basic residues. The residue at position 194 (Ser-194) is a Phosphoserine. Residues 212–224 (KRKKKEKKKKKNR) show a composition bias toward basic residues. Position 226 is a phosphoserine (Ser-226). Residues 234 to 244 (SSQASSSSSLR) show a composition bias toward low complexity.

Belongs to the Mediator complex subunit 19 family. In terms of assembly, component of the Mediator complex, which is composed of MED1, MED4, MED6, MED7, MED8, MED9, MED10, MED11, MED12, MED13, MED13L, MED14, MED15, MED16, MED17, MED18, MED19, MED20, MED21, MED22, MED23, MED24, MED25, MED26, MED27, MED29, MED30, MED31, CCNC, CDK8 and CDC2L6/CDK11. The MED12, MED13, CCNC and CDK8 subunits form a distinct module termed the CDK8 module. Mediator containing the CDK8 module is less active than Mediator lacking this module in supporting transcriptional activation. Individual preparations of the Mediator complex lacking one or more distinct subunits have been variously termed ARC, CRSP, DRIP, PC2, SMCC and TRAP.

The protein localises to the nucleus. Functionally, component of the Mediator complex, a coactivator involved in the regulated transcription of nearly all RNA polymerase II-dependent genes. Mediator functions as a bridge to convey information from gene-specific regulatory proteins to the basal RNA polymerase II transcription machinery. Mediator is recruited to promoters by direct interactions with regulatory proteins and serves as a scaffold for the assembly of a functional preinitiation complex with RNA polymerase II and the general transcription factors. The protein is Mediator of RNA polymerase II transcription subunit 19 (Med19) of Mus musculus (Mouse).